The following is a 362-amino-acid chain: Ferrochelatase (362 aa).

Fe cation-binding residues include H228 and E309.

Belongs to the ferrochelatase family.

It is found in the cytoplasm. The catalysed reaction is heme b + 2 H(+) = protoporphyrin IX + Fe(2+). It participates in porphyrin-containing compound metabolism; protoheme biosynthesis; protoheme from protoporphyrin-IX: step 1/1. Functionally, catalyzes the ferrous insertion into protoporphyrin IX. The protein is Ferrochelatase of Bordetella pertussis (strain Tohama I / ATCC BAA-589 / NCTC 13251).